The following is a 440-amino-acid chain: Enolase (440 aa).

Gln-163 contributes to the (2R)-2-phosphoglycerate binding site. Catalysis depends on Glu-205, which acts as the Proton donor. Mg(2+) contacts are provided by Asp-242, Glu-288, and Asp-315. (2R)-2-phosphoglycerate is bound by residues Lys-340, Arg-369, Ser-370, and Lys-391. Catalysis depends on Lys-340, which acts as the Proton acceptor.

This sequence belongs to the enolase family. The cofactor is Mg(2+).

It is found in the cytoplasm. The protein resides in the secreted. It localises to the cell surface. The enzyme catalyses (2R)-2-phosphoglycerate = phosphoenolpyruvate + H2O. It functions in the pathway carbohydrate degradation; glycolysis; pyruvate from D-glyceraldehyde 3-phosphate: step 4/5. Functionally, catalyzes the reversible conversion of 2-phosphoglycerate (2-PG) into phosphoenolpyruvate (PEP). It is essential for the degradation of carbohydrates via glycolysis. In Limosilactobacillus fermentum (strain NBRC 3956 / LMG 18251) (Lactobacillus fermentum), this protein is Enolase.